A 544-amino-acid chain; its full sequence is CTP synthase (544 aa).

Positions 1 to 266 (MIRYIFITGG…DSEVLSHFGI (266 aa)) are amidoligase domain. Ser-13 contributes to the CTP binding site. Ser-13 contacts UTP. Residues 14 to 19 (SLGKGI) and Asp-71 each bind ATP. Residues Asp-71 and Glu-140 each contribute to the Mg(2+) site. CTP is bound by residues 147–149 (DIE), 187–192 (KTKPTQ), and Lys-223. UTP is bound by residues 187 to 192 (KTKPTQ) and Lys-223. Position 239 to 241 (239 to 241 (RDV)) interacts with ATP. Positions 292-543 (TIGLVGKYTD…IAAAVKQSRL (252 aa)) constitute a Glutamine amidotransferase type-1 domain. Residue Gly-355 coordinates L-glutamine. Cys-382 acts as the Nucleophile; for glutamine hydrolysis in catalysis. Residues 383-386 (YGMQ), Glu-406, and Arg-471 contribute to the L-glutamine site. Residues His-516 and Glu-518 contribute to the active site.

The protein belongs to the CTP synthase family. In terms of assembly, homotetramer.

The enzyme catalyses UTP + L-glutamine + ATP + H2O = CTP + L-glutamate + ADP + phosphate + 2 H(+). The catalysed reaction is L-glutamine + H2O = L-glutamate + NH4(+). It carries out the reaction UTP + NH4(+) + ATP = CTP + ADP + phosphate + 2 H(+). It participates in pyrimidine metabolism; CTP biosynthesis via de novo pathway; CTP from UDP: step 2/2. With respect to regulation, allosterically activated by GTP, when glutamine is the substrate; GTP has no effect on the reaction when ammonia is the substrate. The allosteric effector GTP functions by stabilizing the protein conformation that binds the tetrahedral intermediate(s) formed during glutamine hydrolysis. Inhibited by the product CTP, via allosteric rather than competitive inhibition. In terms of biological role, catalyzes the ATP-dependent amination of UTP to CTP with either L-glutamine or ammonia as the source of nitrogen. Regulates intracellular CTP levels through interactions with the four ribonucleotide triphosphates. The sequence is that of CTP synthase from Hyphomonas neptunium (strain ATCC 15444).